The sequence spans 311 residues: Apolipoprotein E (311 aa).

Positions Met-1–Ala-18 are cleaved as a signal peptide. 8 tandem repeats follow at residues Ala-72–Gly-93, Pro-94–Gly-115, Ala-116–Gly-137, Gln-138–Met-159, Arg-160–Glu-181, Arg-182–Ala-203, Asn-204–Arg-225, and Gly-226–Glu-247. Residues Ala-72–Glu-247 are 8 X 22 AA approximate tandem repeats. Position 135 is a methionine sulfoxide (Met-135). Ser-139 is subject to Phosphoserine. The LDL and other lipoprotein receptors binding stretch occupies residues His-150–Arg-160. Met-154–Arg-157 is a heparin binding site. A lipid-binding and lipoprotein association region spans residues Thr-202–Met-282. Gly-221–Leu-228 lines the heparin pocket. The homooligomerization stretch occupies residues Gln-258–Gln-311. The segment at Arg-270–Met-282 is specificity for association with VLDL.

Belongs to the apolipoprotein A1/A4/E family. Homotetramer. May interact with ABCA1; functionally associated with ABCA1 in the biogenesis of HDLs. May interact with APP/A4 amyloid-beta peptide; the interaction is extremely stable in vitro but its physiological significance is unclear. May interact with MAPT. May interact with MAP2. In the cerebrospinal fluid, interacts with secreted SORL1. Interacts with PMEL; this allows the loading of PMEL luminal fragment on ILVs to induce fibril nucleation. In terms of processing, APOE exists as multiple glycosylated and sialylated glycoforms within cells and in plasma. The extent of glycosylation and sialylation are tissue and context specific. Post-translationally, glycated in plasma VLDL. Phosphorylated by FAM20C in the extracellular medium.

The protein resides in the secreted. It is found in the extracellular space. It localises to the extracellular matrix. Its subcellular location is the extracellular vesicle. The protein localises to the endosome. The protein resides in the multivesicular body. APOE is an apolipoprotein, a protein associating with lipid particles, that mainly functions in lipoprotein-mediated lipid transport between organs via the plasma and interstitial fluids. APOE is a core component of plasma lipoproteins and is involved in their production, conversion and clearance. Apolipoproteins are amphipathic molecules that interact both with lipids of the lipoprotein particle core and the aqueous environment of the plasma. As such, APOE associates with chylomicrons, chylomicron remnants, very low density lipoproteins (VLDL) and intermediate density lipoproteins (IDL) but shows a preferential binding to high-density lipoproteins (HDL). It also binds a wide range of cellular receptors including the LDL receptor/LDLR and the very low-density lipoprotein receptor/VLDLR that mediate the cellular uptake of the APOE-containing lipoprotein particles. Finally, APOE also has a heparin-binding activity and binds heparan-sulfate proteoglycans on the surface of cells, a property that supports the capture and the receptor-mediated uptake of APOE-containing lipoproteins by cells. The protein is Apolipoprotein E (Apoe) of Mus musculus (Mouse).